Consider the following 330-residue polypeptide: Fructose-1,6-bisphosphatase class 1 (330 aa).

Mg(2+) contacts are provided by Glu78, Asp97, Leu99, and Asp100. Substrate is bound by residues 100–103 and Asn188; that span reads DGSS. Glu260 lines the Mg(2+) pocket.

This sequence belongs to the FBPase class 1 family. Homotetramer. The cofactor is Mg(2+).

It localises to the cytoplasm. It catalyses the reaction beta-D-fructose 1,6-bisphosphate + H2O = beta-D-fructose 6-phosphate + phosphate. It functions in the pathway carbohydrate biosynthesis; gluconeogenesis. The chain is Fructose-1,6-bisphosphatase class 1 from Paracoccus denitrificans (strain Pd 1222).